Consider the following 161-residue polypeptide: Protein PLANT CADMIUM RESISTANCE 12 (161 aa).

The helical transmembrane segment at 71–89 threads the bilayer; it reads AGLIHLALGFIGCSWLYAF.

The protein belongs to the cornifelin family.

Its subcellular location is the membrane. In terms of biological role, may be involved in heavy metals transport. The sequence is that of Protein PLANT CADMIUM RESISTANCE 12 (PCR12) from Arabidopsis thaliana (Mouse-ear cress).